Consider the following 177-residue polypeptide: von Ebner gland protein 1 (177 aa).

The signal sequence occupies residues 1–18 (MKALLLTFGLSLLAALQA). A disulfide bond links C80 and C172.

Belongs to the calycin superfamily. Lipocalin family. As to quaternary structure, homodimer.

It is found in the secreted. Functionally, could play a role in taste reception. Could be necessary for the concentration and delivery of sapid molecules in the gustatory system. This Rattus norvegicus (Rat) protein is von Ebner gland protein 1 (Vegp1).